We begin with the raw amino-acid sequence, 290 residues long: 33 kDa chaperonin (290 aa).

Intrachain disulfides connect C235–C237 and C268–C271.

The protein belongs to the HSP33 family. Post-translationally, under oxidizing conditions two disulfide bonds are formed involving the reactive cysteines. Under reducing conditions zinc is bound to the reactive cysteines and the protein is inactive.

It is found in the cytoplasm. Its function is as follows. Redox regulated molecular chaperone. Protects both thermally unfolding and oxidatively damaged proteins from irreversible aggregation. Plays an important role in the bacterial defense system toward oxidative stress. The polypeptide is 33 kDa chaperonin (Streptococcus pyogenes serotype M18 (strain MGAS8232)).